The chain runs to 237 residues: Phosphoadenosine 5'-phosphosulfate reductase (237 aa).

Residue Cys231 is the Nucleophile; cysteine thiosulfonate intermediate of the active site.

It belongs to the PAPS reductase family. CysH subfamily.

Its subcellular location is the cytoplasm. It carries out the reaction [thioredoxin]-disulfide + sulfite + adenosine 3',5'-bisphosphate + 2 H(+) = [thioredoxin]-dithiol + 3'-phosphoadenylyl sulfate. Its pathway is sulfur metabolism; hydrogen sulfide biosynthesis; sulfite from sulfate: step 3/3. Its function is as follows. Catalyzes the formation of sulfite from phosphoadenosine 5'-phosphosulfate (PAPS) using thioredoxin as an electron donor. This is Phosphoadenosine 5'-phosphosulfate reductase from Xylella fastidiosa (strain M12).